The chain runs to 682 residues: Potassium-transporting ATPase ATP-binding subunit (682 aa).

Helical transmembrane passes span 34–54, 62–82, 219–239, and 254–274; these read PVMF…IAMA, ALFS…ANFA, IALT…TATL, and VLVA…LSAI. Aspartate 307 serves as the catalytic 4-aspartylphosphate intermediate. ATP-binding positions include aspartate 344, glutamate 348, 377-384, and lysine 395; that span reads FTAQSRMS. Positions 518 and 522 each coordinate Mg(2+). 3 helical membrane-spanning segments follow: residues 588–608, 616–636, and 656–676; these read FAII…LNIM, AILS…PLAL, and IYGL…DLLL.

Belongs to the cation transport ATPase (P-type) (TC 3.A.3) family. Type IA subfamily. In terms of assembly, the system is composed of three essential subunits: KdpA, KdpB and KdpC.

The protein resides in the cell inner membrane. The catalysed reaction is K(+)(out) + ATP + H2O = K(+)(in) + ADP + phosphate + H(+). Its function is as follows. Part of the high-affinity ATP-driven potassium transport (or Kdp) system, which catalyzes the hydrolysis of ATP coupled with the electrogenic transport of potassium into the cytoplasm. This subunit is responsible for energy coupling to the transport system and for the release of the potassium ions to the cytoplasm. The polypeptide is Potassium-transporting ATPase ATP-binding subunit (Escherichia coli (strain K12 / MC4100 / BW2952)).